A 673-amino-acid polypeptide reads, in one-letter code: Probable boron transporter 7 (673 aa).

The Cytoplasmic portion of the chain corresponds to 1-35 (MEGVKFPFGGIINDFNGRRKCYKQDWLAAFNSGVR). Residues 36–56 (ILAPTLYIFIASALPVIAFGE) form a helical membrane-spanning segment. Over 57–75 (QLSRETDRSLGIAESLAST) the chain is Extracellular. A helical membrane pass occupies residues 76 to 96 (ALCGIIHSVFGGQPLLIVGVA). At 97–121 (EPTIIMYTYLHSFSKSRPELGQKLY) the chain is on the cytoplasmic side. The helical transmembrane segment at 122–142 (LAWAGWVCVWTAVLLMLLAML) threads the bilayer. Residues 143–160 (NACNIISRFTRIAGELFG) are Extracellular-facing. Residues 161–181 (MLITVLFIQEAVKGLIGEFLV) traverse the membrane as a helical segment. Topologically, residues 182–197 (PKSDDPSLEVYQFQWR) are cytoplasmic. A helical membrane pass occupies residues 198–218 (YTNGLLAVIFSFGLLYTALKS). The Extracellular portion of the chain corresponds to 219 to 233 (RRARSWKYGFRWMRG). A helical transmembrane segment spans residues 234–254 (FIGDYGTLLMLVLWSAFSYTV). Residues 255–289 (PRNLPEGVPRRLELPLPWASESLYHWTVVKDMAKV) lie on the Cytoplasmic side of the membrane. A helical transmembrane segment spans residues 290 to 310 (PPLYILAAFIPAIMIAGLYFF). The Extracellular portion of the chain corresponds to 311–330 (DHCVSAQMAQQKEFNLKNPT). A helical transmembrane segment spans residues 331–351 (AYHYDIFILGIMTLICGLLGL). At 352–468 (PPSNGVIPQS…EQRVSNLLQS (117 aa)) the chain is on the cytoplasmic side. The helical transmembrane segment at 469-489 (VLVGLLILAVPVLRMIPTSVL) threads the bilayer. Topologically, residues 490–556 (WGYFTYMAVD…QLLYFLICYG (67 aa)) are extracellular. A helical transmembrane segment spans residues 557–577 (VTWIPVGGILFPLPFFILIAL). Over 578–673 (RQYILQRLFD…SQMVKIYNHS (96 aa)) the chain is Cytoplasmic.

The protein belongs to the anion exchanger (TC 2.A.31.3) family.

It is found in the membrane. In terms of biological role, putative boron transporter. Boron is essential for maintaining the integrity of plants cell walls. The protein is Probable boron transporter 7 (BOR7) of Arabidopsis thaliana (Mouse-ear cress).